The primary structure comprises 405 residues: Putative arsenical pump-driving ATPase (405 aa).

Position 8–15 (8–15) interacts with ATP; sequence GKGGVGKT.

This sequence belongs to the arsA ATPase family.

The catalysed reaction is arsenite(in) + ATP + H2O = arsenite(out) + ADP + phosphate + H(+). Anion-transporting ATPase. Catalyzes the extrusion of arsenite. This Prosthecochloris vibrioformis (Chlorobium vibrioforme) protein is Putative arsenical pump-driving ATPase.